The following is an 812-amino-acid chain: MSEQGDLNQAIAEEGGTEQETATPENGIVKSESLDEEEKLELQRRLEAQNQERRKSKSGAGKGKLTRSLAVCEESSARPGGESLQDQESIHLQLSSFSSLQEEDKSRKDDSEREKEKDKNKDKTSEKPKIRMLSKDCSQEYTDSTGIDLHEFLINTLKNNSRDRMILLKMEQEIIDFIADNNNHYKKFPQMSSYQRMLVHRVAAYFGLDHNVDQTGKSVIINKTSSTRIPEQRFCEHLKDEKGEESQKRFILKRDNSSIDKEDNQQNRMHPFRDDRRSKSIEEREEEYQRVRERIFAHDSVCSQESLFVENSRLLEDSNICNETYKKRQLFRGNRDGSGRTSGSRQSSSENELKWSDHQRAWSSTDSDSSNRNLKPAMTKTASFGGITVLTRGDSTSSTRSTGKLSKAGSESSSSAGSSGSLSRTHPPLQSTPLVSGVAAGSPGCVPYPENGIGGQVAPSSTSYILLPLEAATGIPPGSILLNPHTGQPFVNPDGTPAIYNPPTSQQPLRSAMVGQSQQQPPQQQPSPQPQQQVQPPQPQMAGPLVTQRDDVATQFGQMTLSRQSSGETPEPPSGPVYPSSLMPQPAQQPSYVIASTGQQLPTGGFSGSGPPISQQVLQPPPSPQGFVQQPPPAQMPVYYYPSGQYPTSTTQQYRPMAPVQYNAQRSQQMPQAAQQAGYQPVLSGQQGFQGLIGVQQPPQSQNVINNQQGTPVQSVMVSYPTMSSYQVPMTQGSQGLPQQSYQQPIMLPNQAGQGSLPATGMPVYCNVTPPTPQNNLRLIGPHCPSSTVPVMSASCRTNCASMSNAGWQVKF.

A disordered region spans residues 1-130 (MSEQGDLNQA…KDKTSEKPKI (130 aa)). N-acetylserine is present on serine 2. Residues 9–25 (QAIAEEGGTEQETATPE) show a composition bias toward low complexity. Residues 32–58 (ESLDEEEKLELQRRLEAQNQERRKSKS) adopt a coiled-coil conformation. Serine 33 carries the phosphoserine modification. Over residues 40–53 (LELQRRLEAQNQER) the composition is skewed to basic and acidic residues. Phosphoserine is present on serine 56. Positions 90-100 (IHLQLSSFSSL) are enriched in low complexity. Basic and acidic residues predominate over residues 102–130 (EEDKSRKDDSEREKEKDKNKDKTSEKPKI). Serine 134 is modified (phosphoserine). The region spanning 164–227 (RMILLKMEQE…SVIINKTSST (64 aa)) is the R3H domain. An SUZ domain is found at 228 to 300 (RIPEQRFCEH…VRERIFAHDS (73 aa)). A disordered region spans residues 246-281 (SQKRFILKRDNSSIDKEDNQQNRMHPFRDDRRSKSI). Serine 300 carries the phosphoserine modification. 3 disordered regions span residues 332–436 (RGNR…PLVS), 485–544 (HTGQ…MAGP), and 561–632 (LSRQ…QQPP). Positions 339–349 (GRTSGSRQSSS) are enriched in low complexity. Basic and acidic residues predominate over residues 351–360 (NELKWSDHQR). A compositionally biased stretch (polar residues) spans 361–373 (AWSSTDSDSSNRN). 2 positions are modified to phosphoserine: serine 363 and serine 383. Residues 391–423 (TRGDSTSSTRSTGKLSKAGSESSSSAGSSGSLS) show a composition bias toward low complexity. Serine 562 is subject to Phosphoserine. Residues 582–602 (LMPQPAQQPSYVIASTGQQLP) are compositionally biased toward polar residues. Over residues 619–632 (QPPPSPQGFVQQPP) the composition is skewed to pro residues. Asymmetric dimethylarginine is present on arginine 655.

As to quaternary structure, interacts with CALM1. In terms of processing, phosphorylation at Ser-56 favors interaction with CALM1. Isoform 1 is methylated by CARM1 at Arg-655 in immature thymocytes. As to expression, isoform 2 is expressed in brain. Isoform 1 is present in immature thymocytes (at protein level).

It localises to the cytoplasm. In terms of biological role, isoform 2 may act as a competitive inhibitor of calmodulin-dependent enzymes such as calcineurin in neurons. This Homo sapiens (Human) protein is cAMP-regulated phosphoprotein 21 (ARPP21).